Here is a 488-residue protein sequence, read N- to C-terminus: Fumarate hydratase (488 aa).

(S)-malate-binding residues include Ser105, Ser147, Asn148, Thr194, and His195. The active-site Proton donor/acceptor is the His195. Residue Ser340 is part of the active site. Residues Ser341, Lys346, and Asn348 each contribute to the (S)-malate site.

This sequence belongs to the class-II fumarase/aspartase family. Fumarase subfamily. Homotetramer.

Its subcellular location is the cytoplasm. It is found in the cytosol. It carries out the reaction (S)-malate = fumarate + H2O. Its function is as follows. Catalyzes the reversible stereospecific interconversion of fumarate to L-malate. Fumarate metabolism in the cytosol plays a role during urea cycle and arginine metabolism; fumarate being a by-product of the urea cycle and amino-acid catabolism. The polypeptide is Fumarate hydratase (Schistosoma mansoni (Blood fluke)).